Here is a 157-residue protein sequence, read N- to C-terminus: Small ribosomal subunit protein uS7 (157 aa).

The protein belongs to the universal ribosomal protein uS7 family. Part of the 30S ribosomal subunit. Contacts proteins S9 and S11.

Its function is as follows. One of the primary rRNA binding proteins, it binds directly to 16S rRNA where it nucleates assembly of the head domain of the 30S subunit. Is located at the subunit interface close to the decoding center, probably blocks exit of the E-site tRNA. The chain is Small ribosomal subunit protein uS7 from Pseudomonas fluorescens (strain Pf0-1).